The chain runs to 473 residues: MMKIKYLYQLLLSHISILILAFVIIISLFSHFVKEFAYQNKVEELTSYAVQIANEFQSGQVDMRRLYPYQDILSTRKTQFIIFNEEQQPYFLPEGFHHPPREQLKKSEWNKLKKGQTVTIRADGRFDDEVSLVAQPIFVQNEFKGAVLLISPISGVEQMVNQVNLYMFYAVISTLVITILVSWLLSKFHVKRIQKLREATDKVASGDYDIHLENSYGDEIGVLASDFNIMAKKLKQSRDEIERLEKRRRQFIADVSHELKTPLTTINGLVEGLNSHTIPEDKKDKCFSLISEETKRMLRLVKENLDYEKIRSQQITLNKLDVPLIEVFEIVKEHLQQQAEEKQNKLMIQVEDHVIVHADYDRFIQILVNITKNSIQFTQNGDIWLRGMEGYKETIIEIEDTGIGIPKEDIEHIWERFYKADISRTNTAYGEYGLGLSIVRQLVEMHQGTVEIKSEEGKGTKFIIRLPLTAKQQ.

The Cytoplasmic segment spans residues 1 to 9; the sequence is MMKIKYLYQ. A helical transmembrane segment spans residues 10–30; that stretch reads LLLSHISILILAFVIIISLFS. Over 31-164 the chain is Extracellular; sequence HFVKEFAYQN…GVEQMVNQVN (134 aa). A helical membrane pass occupies residues 165–185; that stretch reads LYMFYAVISTLVITILVSWLL. At 186 to 473 the chain is on the cytoplasmic side; sequence SKFHVKRIQK…IRLPLTAKQQ (288 aa). Residues 187 to 239 enclose the HAMP domain; that stretch reads KFHVKRIQKLREATDKVASGDYDIHLENSYGDEIGVLASDFNIMAKKLKQSRD. The 217-residue stretch at 254-470 folds into the Histidine kinase domain; sequence DVSHELKTPL…KFIIRLPLTA (217 aa). His-257 carries the phosphohistidine; by autocatalysis modification.

It localises to the cell membrane. The enzyme catalyses ATP + protein L-histidine = ADP + protein N-phospho-L-histidine.. Its function is as follows. Could be member of the two-component regulatory system YclK/YclJ. Potentially phosphorylates YclJ. The sequence is that of Sensor histidine kinase YclK (yclK) from Bacillus subtilis (strain 168).